Consider the following 346-residue polypeptide: Phosphoribosylformylglycinamidine cyclo-ligase (346 aa).

Belongs to the AIR synthase family.

It is found in the cytoplasm. The catalysed reaction is 2-formamido-N(1)-(5-O-phospho-beta-D-ribosyl)acetamidine + ATP = 5-amino-1-(5-phospho-beta-D-ribosyl)imidazole + ADP + phosphate + H(+). It participates in purine metabolism; IMP biosynthesis via de novo pathway; 5-amino-1-(5-phospho-D-ribosyl)imidazole from N(2)-formyl-N(1)-(5-phospho-D-ribosyl)glycinamide: step 2/2. This Bacillus anthracis (strain A0248) protein is Phosphoribosylformylglycinamidine cyclo-ligase.